Reading from the N-terminus, the 605-residue chain is Pescadillo homolog (605 aa).

The segment at 51 to 484 is sufficient for interaction with ERB1; it reads KANKGSTAPT…GEEEESESES (434 aa). Ser-288 is subject to Phosphoserine. Residues 294 to 342 are a coiled coil; that stretch reads LKSALNADEANTDETEKEEEQEKKQEKEQEKEQNEETELDTFEDNNKNK. A disordered region spans residues 297-342; that stretch reads ALNADEANTDETEKEEEQEKKQEKEQEKEQNEETELDTFEDNNKNK. Residues 303–312 show a composition bias toward acidic residues; sequence ANTDETEKEE. Phosphothreonine is present on Thr-308. Over residues 313-327 the composition is skewed to basic and acidic residues; it reads EQEKKQEKEQEKEQN. The BRCT domain occupies 355-449; sequence PVASLFSAFV…ELVPANKYLP (95 aa). Positions 459-605 are disordered; sequence PWGDAIGYDP…AKLNKLDSKK (147 aa). Residues 473–510 are compositionally biased toward acidic residues; it reads EEGEEEESESESESEDQVEEEDQEVVAGEEDDDDDEEL. Positions 530 to 605 form a coiled coil; that stretch reads EADKDVNKSK…AKLNKLDSKK (76 aa). Positions 562-571 are enriched in basic residues; the sequence is KQKKLYKKMK. Residues 575-584 are compositionally biased toward basic and acidic residues; it reads AKKEEQAENL. The segment covering 585–598 has biased composition (basic residues); the sequence is KKKKKQIAKQKAKL.

The protein belongs to the pescadillo family. As to quaternary structure, component of the NOP7 complex, composed of ERB1, NOP7 and YTM1. The complex is held together by ERB1, which interacts with NOP7 via its N-terminal domain and with YTM1 via a high-affinity interaction between the seven-bladed beta-propeller domains of the 2 proteins. The NOP7 complex associates with the 66S pre-ribosome.

It localises to the nucleus. Its subcellular location is the nucleolus. The protein localises to the nucleoplasm. Functionally, component of the NOP7 complex, which is required for maturation of the 25S and 5.8S ribosomal RNAs and formation of the 60S ribosome. This chain is Pescadillo homolog, found in Saccharomyces cerevisiae (strain YJM789) (Baker's yeast).